The following is a 308-amino-acid chain: MARAGESGRAGVRRSTAPSRRTGGARAAADAVRAELRRRLEPSLTTAGFDLEDVSVTRAGARSVVRVVVDRDGGIDLDAVADASRLVSAVLDGEDIGTDGAGGTGGSGGAAGGSGASPISGAYVLEVTSPGVDRPLVEPRHWRRAVGRLVVVRRADGVEVEGRVLSADDEGADLAVPTAPARRGRPVRRRIERVVYATVARAAVQVEFGSATDADGDTDVDADAGAELPAGAELPAGADLGLGAESDVDLDEGLEDDDGLEDEDDEDEYGAAGGGAPAGSAADEVVEDHGAVDTEAGLIGRTGKEMNR.

Disordered regions lie at residues 1–31 (MARAGESGRAGVRRSTAPSRRTGGARAAADA), 94–113 (EDIGTDGAGGTGGSGGAAGG), and 249–308 (DLDE…EMNR). Low complexity predominate over residues 17-31 (APSRRTGGARAAADA). Positions 99 to 113 (DGAGGTGGSGGAAGG) are enriched in gly residues. Residues 249–269 (DLDEGLEDDDGLEDEDDEDEY) show a composition bias toward acidic residues.

It belongs to the RimP family.

The protein localises to the cytoplasm. In terms of biological role, required for maturation of 30S ribosomal subunits. The polypeptide is Ribosome maturation factor RimP (Parafrankia sp. (strain EAN1pec)).